A 251-amino-acid polypeptide reads, in one-letter code: Probable phosphatase Sputw3181_2734 (251 aa).

Zn(2+)-binding residues include histidine 8, histidine 10, histidine 16, histidine 41, glutamate 74, histidine 102, histidine 132, aspartate 193, and histidine 195.

Belongs to the PHP family. Zn(2+) is required as a cofactor.

This chain is Probable phosphatase Sputw3181_2734, found in Shewanella sp. (strain W3-18-1).